The sequence spans 146 residues: Cytochrome c oxidase subunit 5A, mitochondrial (146 aa).

The transit peptide at 1–37 directs the protein to the mitochondrion; sequence MLAAALRRCTAAAAARGLLHPASAPSPAAAVCSIRCY. The SIFI-degron signature appears at 2–16; the sequence is LAAALRRCTAAAAAR. An N6-acetyllysine mark is found at K83 and K109. T137 carries the post-translational modification Phosphothreonine.

It belongs to the cytochrome c oxidase subunit 5A family. Component of the cytochrome c oxidase (complex IV, CIV), a multisubunit enzyme composed of 14 subunits. The complex is composed of a catalytic core of 3 subunits MT-CO1, MT-CO2 and MT-CO3, encoded in the mitochondrial DNA, and 11 supernumerary subunits COX4I, COX5A, COX5B, COX6A, COX6B, COX6C, COX7A, COX7B, COX7C, COX8 and NDUFA4, which are encoded in the nuclear genome. The complex exists as a monomer or a dimer and forms supercomplexes (SCs) in the inner mitochondrial membrane with NADH-ubiquinone oxidoreductase (complex I, CI) and ubiquinol-cytochrome c oxidoreductase (cytochrome b-c1 complex, complex III, CIII), resulting in different assemblies (supercomplex SCI(1)III(2)IV(1) and megacomplex MCI(2)III(2)IV(2)). Interacts with AFG1L. Interacts with RAB5IF. Post-translationally, in response to mitochondrial stress, the precursor protein is ubiquitinated by the SIFI complex in the cytoplasm before mitochondrial import, leading to its degradation. Within the SIFI complex, UBR4 initiates ubiquitin chain that are further elongated or branched by KCMF1.

It localises to the mitochondrion inner membrane. Its pathway is energy metabolism; oxidative phosphorylation. Functionally, component of the cytochrome c oxidase, the last enzyme in the mitochondrial electron transport chain which drives oxidative phosphorylation. The respiratory chain contains 3 multisubunit complexes succinate dehydrogenase (complex II, CII), ubiquinol-cytochrome c oxidoreductase (cytochrome b-c1 complex, complex III, CIII) and cytochrome c oxidase (complex IV, CIV), that cooperate to transfer electrons derived from NADH and succinate to molecular oxygen, creating an electrochemical gradient over the inner membrane that drives transmembrane transport and the ATP synthase. Cytochrome c oxidase is the component of the respiratory chain that catalyzes the reduction of oxygen to water. Electrons originating from reduced cytochrome c in the intermembrane space (IMS) are transferred via the dinuclear copper A center (CU(A)) of subunit 2 and heme A of subunit 1 to the active site in subunit 1, a binuclear center (BNC) formed by heme A3 and copper B (CU(B)). The BNC reduces molecular oxygen to 2 water molecules using 4 electrons from cytochrome c in the IMS and 4 protons from the mitochondrial matrix. This chain is Cytochrome c oxidase subunit 5A, mitochondrial (Cox5a), found in Mus musculus (Mouse).